Here is a 420-residue protein sequence, read N- to C-terminus: Gamma-glutamyl phosphate reductase (420 aa).

The protein belongs to the gamma-glutamyl phosphate reductase family.

It is found in the cytoplasm. It carries out the reaction L-glutamate 5-semialdehyde + phosphate + NADP(+) = L-glutamyl 5-phosphate + NADPH + H(+). The protein operates within amino-acid biosynthesis; L-proline biosynthesis; L-glutamate 5-semialdehyde from L-glutamate: step 2/2. Functionally, catalyzes the NADPH-dependent reduction of L-glutamate 5-phosphate into L-glutamate 5-semialdehyde and phosphate. The product spontaneously undergoes cyclization to form 1-pyrroline-5-carboxylate. The chain is Gamma-glutamyl phosphate reductase from Pasteurella multocida (strain Pm70).